Reading from the N-terminus, the 406-residue chain is Exodeoxyribonuclease 7 large subunit (406 aa).

It belongs to the XseA family. In terms of assembly, heterooligomer composed of large and small subunits.

The protein localises to the cytoplasm. The enzyme catalyses Exonucleolytic cleavage in either 5'- to 3'- or 3'- to 5'-direction to yield nucleoside 5'-phosphates.. In terms of biological role, bidirectionally degrades single-stranded DNA into large acid-insoluble oligonucleotides, which are then degraded further into small acid-soluble oligonucleotides. The sequence is that of Exodeoxyribonuclease 7 large subunit from Desulfitobacterium hafniense (strain Y51).